Consider the following 361-residue polypeptide: Histidine biosynthesis bifunctional protein HisB (361 aa).

The segment at 1-172 is histidinol-phosphatase; sequence MSQPTLFIDR…PKTTACERPP (172 aa). Asp9 serves as the catalytic Nucleophile. Positions 9 and 11 each coordinate Mg(2+). Catalysis depends on Asp11, which acts as the Proton donor. 4 residues coordinate Zn(2+): Cys92, His94, Cys100, and Cys102. Asp129 serves as a coordination point for Mg(2+). The imidazoleglycerol-phosphate dehydratase stretch occupies residues 173-361; it reads RYAEVVRTTK…NELPSSKGVL (189 aa).

It in the N-terminal section; belongs to the histidinol-phosphatase family. This sequence in the C-terminal section; belongs to the imidazoleglycerol-phosphate dehydratase family. Requires Mg(2+) as cofactor. Zn(2+) serves as cofactor.

Its subcellular location is the cytoplasm. It catalyses the reaction D-erythro-1-(imidazol-4-yl)glycerol 3-phosphate = 3-(imidazol-4-yl)-2-oxopropyl phosphate + H2O. The enzyme catalyses L-histidinol phosphate + H2O = L-histidinol + phosphate. It participates in amino-acid biosynthesis; L-histidine biosynthesis; L-histidine from 5-phospho-alpha-D-ribose 1-diphosphate: step 6/9. The protein operates within amino-acid biosynthesis; L-histidine biosynthesis; L-histidine from 5-phospho-alpha-D-ribose 1-diphosphate: step 8/9. This Actinobacillus pleuropneumoniae serotype 7 (strain AP76) protein is Histidine biosynthesis bifunctional protein HisB.